A 1090-amino-acid polypeptide reads, in one-letter code: Nitrogen assimilation transcription factor nit-4 (1090 aa).

Residues 1-14 show a composition bias toward polar residues; sequence MNSSDVQMMSSQDA. The tract at residues 1-43 is disordered; that stretch reads MNSSDVQMMSSQDAPGSAGLAPDNIASSLPSKKKSRRGADPTN. A DNA-binding region (zn(2)-C6 fungal-type) is located at residues 53 to 81; the sequence is CIACRRRKSKCDGALPSCAACASVYGTEC. Disordered stretches follow at residues 145–176, 666–689, 773–798, 825–875, 936–999, and 1033–1053; these read RRDE…SQAV, FSTS…PAPP, HQHH…YQQQ, GIPT…VKPP, QGWD…QRQQ, and HGAE…TTVG. Residues 167-176 are compositionally biased toward basic and acidic residues; it reads GRDDATSQAV. Polar residues predominate over residues 666–677; it reads FSTSEVPSPNRT. The span at 849–859 shows a compositional bias: low complexity; that stretch reads QPQQQQQPQAQ. Composition is skewed to gly residues over residues 940-965 and 976-988; these read LEGG…GGAG and NIGG…GGST. Residues 990–999 are compositionally biased toward low complexity; that stretch reads QRQQQQQRQQ.

Its subcellular location is the nucleus. Pathway-specific regulatory gene of nitrate assimilation; it activates the transcription of the genes for nitrate and nitrite reductases. The sequence is that of Nitrogen assimilation transcription factor nit-4 (nit-4) from Neurospora crassa (strain ATCC 24698 / 74-OR23-1A / CBS 708.71 / DSM 1257 / FGSC 987).